Consider the following 82-residue polypeptide: MTALFENPTHNLEAQGLRCPEPVMMVRKTVRKMEEGETLLILADDPSTTRDIPSFCRFMDHTLVAADTETLPYRFLIRKGSN.

Cys-19 functions as the Cysteine persulfide intermediate in the catalytic mechanism.

Belongs to the sulfur carrier protein TusA family.

The protein localises to the cytoplasm. Sulfur carrier protein which probably makes part of a sulfur-relay system. This is Sulfur carrier protein TusA from Photobacterium profundum (strain SS9).